A 171-amino-acid polypeptide reads, in one-letter code: Probable chorismate pyruvate-lyase (171 aa).

Substrate contacts are provided by Met-36, Arg-78, Leu-116, and Glu-157.

It belongs to the UbiC family.

It is found in the cytoplasm. It catalyses the reaction chorismate = 4-hydroxybenzoate + pyruvate. It functions in the pathway cofactor biosynthesis; ubiquinone biosynthesis. In terms of biological role, removes the pyruvyl group from chorismate, with concomitant aromatization of the ring, to provide 4-hydroxybenzoate (4HB) for the ubiquinone pathway. The sequence is that of Probable chorismate pyruvate-lyase from Bartonella bacilliformis (strain ATCC 35685 / KC583 / Herrer 020/F12,63).